Here is a 163-residue protein sequence, read N- to C-terminus: 2-C-methyl-D-erythritol 2,4-cyclodiphosphate synthase (163 aa).

A divalent metal cation-binding residues include Asp12 and His14. Residues 12–14 and 38–39 contribute to the 4-CDP-2-C-methyl-D-erythritol 2-phosphate site; these read DVH and HS. His46 serves as a coordination point for a divalent metal cation. 4-CDP-2-C-methyl-D-erythritol 2-phosphate is bound by residues 60-62, 136-139, Phe143, and Arg146; these read DIG and TTSE.

Belongs to the IspF family. Homotrimer. It depends on a divalent metal cation as a cofactor.

The enzyme catalyses 4-CDP-2-C-methyl-D-erythritol 2-phosphate = 2-C-methyl-D-erythritol 2,4-cyclic diphosphate + CMP. The protein operates within isoprenoid biosynthesis; isopentenyl diphosphate biosynthesis via DXP pathway; isopentenyl diphosphate from 1-deoxy-D-xylulose 5-phosphate: step 4/6. Its function is as follows. Involved in the biosynthesis of isopentenyl diphosphate (IPP) and dimethylallyl diphosphate (DMAPP), two major building blocks of isoprenoid compounds. Catalyzes the conversion of 4-diphosphocytidyl-2-C-methyl-D-erythritol 2-phosphate (CDP-ME2P) to 2-C-methyl-D-erythritol 2,4-cyclodiphosphate (ME-CPP) with a corresponding release of cytidine 5-monophosphate (CMP). In Xanthomonas oryzae pv. oryzae (strain MAFF 311018), this protein is 2-C-methyl-D-erythritol 2,4-cyclodiphosphate synthase.